The following is a 156-amino-acid chain: ATP synthase subunit b 1 (156 aa).

The helical transmembrane segment at leucine 7–leucine 29 threads the bilayer.

Belongs to the ATPase B chain family. As to quaternary structure, F-type ATPases have 2 components, F(1) - the catalytic core - and F(0) - the membrane proton channel. F(1) has five subunits: alpha(3), beta(3), gamma(1), delta(1), epsilon(1). F(0) has three main subunits: a(1), b(2) and c(10-14). The alpha and beta chains form an alternating ring which encloses part of the gamma chain. F(1) is attached to F(0) by a central stalk formed by the gamma and epsilon chains, while a peripheral stalk is formed by the delta and b chains.

It is found in the cell inner membrane. In terms of biological role, f(1)F(0) ATP synthase produces ATP from ADP in the presence of a proton or sodium gradient. F-type ATPases consist of two structural domains, F(1) containing the extramembraneous catalytic core and F(0) containing the membrane proton channel, linked together by a central stalk and a peripheral stalk. During catalysis, ATP synthesis in the catalytic domain of F(1) is coupled via a rotary mechanism of the central stalk subunits to proton translocation. Functionally, component of the F(0) channel, it forms part of the peripheral stalk, linking F(1) to F(0). This Vibrio campbellii (strain ATCC BAA-1116) protein is ATP synthase subunit b 1.